We begin with the raw amino-acid sequence, 85 residues long: Large ribosomal subunit protein bL27 (85 aa).

A disordered region spans residues 1–20; sequence MAHKKAGGSTRNGRDSEAKR.

It belongs to the bacterial ribosomal protein bL27 family.

The protein is Large ribosomal subunit protein bL27 of Citrobacter koseri (strain ATCC BAA-895 / CDC 4225-83 / SGSC4696).